We begin with the raw amino-acid sequence, 359 residues long: Alanine racemase (359 aa).

Lysine 34 acts as the Proton acceptor; specific for D-alanine in catalysis. At lysine 34 the chain carries N6-(pyridoxal phosphate)lysine. Arginine 129 lines the substrate pocket. Tyrosine 255 functions as the Proton acceptor; specific for L-alanine in the catalytic mechanism. Methionine 303 is a substrate binding site.

The protein belongs to the alanine racemase family. Pyridoxal 5'-phosphate serves as cofactor.

It carries out the reaction L-alanine = D-alanine. Its pathway is amino-acid biosynthesis; D-alanine biosynthesis; D-alanine from L-alanine: step 1/1. In terms of biological role, catalyzes the interconversion of L-alanine and D-alanine. May also act on other amino acids. This is Alanine racemase (alr) from Shigella dysenteriae serotype 1 (strain Sd197).